Here is a 423-residue protein sequence, read N- to C-terminus: MLNLKFIIENIEKVIEKLNTRTGDFSYLNKLLVLNIKKKKLIFNIETLRYQQNKISKEISILKQNKTNTENIFERSIFLKNEIHVLENDFKKTDSEISEILNNIPNLPHESVILLSKDNNKINFKKYLSPKKFNFNIKDHVTLGRNLNILDFDRASKITGSRFIVYKGLGARLERSLIQFMMDLHSEKGYIEIIPPFIVNDISMFSTGQLPKFKNDSYRLENSNNWYLNPTGEVPAINLHRNEVLSQKNLPLNYVVFTTCFRQEAGTAGKDTRGILRQHQFNKVELIKFTEPQDSYLELENMLQDAESVLQKLELPYRVIMLPSHELGFSASKTYDIEVWLPGSNNYREISSISNTESFQSLRANIKFYSKNKGKNKYVHTLNGSGLAIGRTLIAILENYQNKDGTITVPKVLRSYMRTDIIK.

Thr-231–Glu-233 is a binding site for L-serine. Residue Arg-262–Glu-264 coordinates ATP. Glu-285 serves as a coordination point for L-serine. ATP is bound at residue Glu-349 to Ser-352. L-serine is bound at residue Ser-385.

Belongs to the class-II aminoacyl-tRNA synthetase family. Type-1 seryl-tRNA synthetase subfamily. Homodimer. The tRNA molecule binds across the dimer.

Its subcellular location is the cytoplasm. It catalyses the reaction tRNA(Ser) + L-serine + ATP = L-seryl-tRNA(Ser) + AMP + diphosphate + H(+). It carries out the reaction tRNA(Sec) + L-serine + ATP = L-seryl-tRNA(Sec) + AMP + diphosphate + H(+). It participates in aminoacyl-tRNA biosynthesis; selenocysteinyl-tRNA(Sec) biosynthesis; L-seryl-tRNA(Sec) from L-serine and tRNA(Sec): step 1/1. In terms of biological role, catalyzes the attachment of serine to tRNA(Ser). Is also able to aminoacylate tRNA(Sec) with serine, to form the misacylated tRNA L-seryl-tRNA(Sec), which will be further converted into selenocysteinyl-tRNA(Sec). The chain is Serine--tRNA ligase from Phytoplasma mali (strain AT).